Consider the following 321-residue polypeptide: tRNA(Ile)-lysidine synthase (321 aa).

30–35 contacts ATP; it reads SGGSDS.

This sequence belongs to the tRNA(Ile)-lysidine synthase family.

It is found in the cytoplasm. The catalysed reaction is cytidine(34) in tRNA(Ile2) + L-lysine + ATP = lysidine(34) in tRNA(Ile2) + AMP + diphosphate + H(+). Its function is as follows. Ligates lysine onto the cytidine present at position 34 of the AUA codon-specific tRNA(Ile) that contains the anticodon CAU, in an ATP-dependent manner. Cytidine is converted to lysidine, thus changing the amino acid specificity of the tRNA from methionine to isoleucine. The chain is tRNA(Ile)-lysidine synthase from Chlamydia trachomatis serovar L2 (strain ATCC VR-902B / DSM 19102 / 434/Bu).